Here is a 550-residue protein sequence, read N- to C-terminus: Hydroxylamine reductase (550 aa).

4 residues coordinate [2Fe-2S] cluster: Cys-3, Cys-6, Cys-18, and Cys-25. Hybrid [4Fe-2O-2S] cluster contacts are provided by His-249, Glu-273, Cys-317, Cys-405, Cys-433, Cys-458, Glu-492, and Lys-494. Position 405 is a cysteine persulfide (Cys-405).

Belongs to the HCP family. Requires [2Fe-2S] cluster as cofactor. Hybrid [4Fe-2O-2S] cluster serves as cofactor.

Its subcellular location is the cytoplasm. The enzyme catalyses A + NH4(+) + H2O = hydroxylamine + AH2 + H(+). Catalyzes the reduction of hydroxylamine to form NH(3) and H(2)O. This Proteus mirabilis (strain HI4320) protein is Hydroxylamine reductase.